A 343-amino-acid polypeptide reads, in one-letter code: Holliday junction branch migration complex subunit RuvB (343 aa).

Residues 1 to 185 form a large ATPase domain (RuvB-L) region; that stretch reads MEQEDFNIRE…FGINLHLEYY (185 aa). Residues L24, R25, G66, K69, T70, T71, 132 to 134, R175, Y185, and R222 each bind ATP; that span reads EDY. T70 provides a ligand contact to Mg(2+). The segment at 186 to 256 is small ATPAse domain (RuvB-S); that stretch reads DDDILSNIIR…IAQFALEALN (71 aa). The segment at 259-343 is head domain (RuvB-H); it reads KYGLDEIDNK…YSSQKTLFND (85 aa). Residues R314 and R319 each contribute to the DNA site.

It belongs to the RuvB family. In terms of assembly, homohexamer. Forms an RuvA(8)-RuvB(12)-Holliday junction (HJ) complex. HJ DNA is sandwiched between 2 RuvA tetramers; dsDNA enters through RuvA and exits via RuvB. An RuvB hexamer assembles on each DNA strand where it exits the tetramer. Each RuvB hexamer is contacted by two RuvA subunits (via domain III) on 2 adjacent RuvB subunits; this complex drives branch migration. In the full resolvosome a probable DNA-RuvA(4)-RuvB(12)-RuvC(2) complex forms which resolves the HJ.

The protein resides in the cytoplasm. The enzyme catalyses ATP + H2O = ADP + phosphate + H(+). Its function is as follows. The RuvA-RuvB-RuvC complex processes Holliday junction (HJ) DNA during genetic recombination and DNA repair, while the RuvA-RuvB complex plays an important role in the rescue of blocked DNA replication forks via replication fork reversal (RFR). RuvA specifically binds to HJ cruciform DNA, conferring on it an open structure. The RuvB hexamer acts as an ATP-dependent pump, pulling dsDNA into and through the RuvAB complex. RuvB forms 2 homohexamers on either side of HJ DNA bound by 1 or 2 RuvA tetramers; 4 subunits per hexamer contact DNA at a time. Coordinated motions by a converter formed by DNA-disengaged RuvB subunits stimulates ATP hydrolysis and nucleotide exchange. Immobilization of the converter enables RuvB to convert the ATP-contained energy into a lever motion, pulling 2 nucleotides of DNA out of the RuvA tetramer per ATP hydrolyzed, thus driving DNA branch migration. The RuvB motors rotate together with the DNA substrate, which together with the progressing nucleotide cycle form the mechanistic basis for DNA recombination by continuous HJ branch migration. Branch migration allows RuvC to scan DNA until it finds its consensus sequence, where it cleaves and resolves cruciform DNA. This Bacteroides thetaiotaomicron (strain ATCC 29148 / DSM 2079 / JCM 5827 / CCUG 10774 / NCTC 10582 / VPI-5482 / E50) protein is Holliday junction branch migration complex subunit RuvB.